Reading from the N-terminus, the 89-residue chain is Neurotoxin beta-KTx 12 (89 aa).

An N-terminal signal peptide occupies residues Met-1–Ala-20. A propeptide spanning residues Gly-21–Asp-39 is cleaved from the precursor. The region spanning Glu-53–Lys-89 is the BetaSPN-type CS-alpha/beta domain. 3 cysteine pairs are disulfide-bonded: Cys-56–Cys-76, Cys-63–Cys-81, and Cys-67–Cys-83.

This sequence belongs to the long chain scorpion toxin family. Class 2 subfamily. In terms of tissue distribution, expressed by the venom gland.

The protein resides in the secreted. In terms of biological role, inhibits voltage-gated potassium channel. The chain is Neurotoxin beta-KTx 12 from Lychas mucronatus (Chinese swimming scorpion).